The following is a 378-amino-acid chain: MNHSDTLSLSLELLQQPSVTPIDHTCQTIMADRLAKVGFHIEPMRFGDVDNLWARRGTEGPVFCFAGHTDVVPTGRLDAWNSDPFAPEIRDGKLYGRGSADMKTALAAMVVASERFVAKHPNHKGSIAFLITSDEEGPAVNGTVKVIETLEKRNEKITWCLVGEPSSTHKLGDIVKNGRRGSLNAVLKVQGKQGHVAYPHLARNPIHEASPALAELCQTVWDNGNEYFPATSFQISNIHAGTGATNVIPGALEVTFNFRYSTEVTAEQLKQRVHEILDKHGLQYEIVWNLSGLPFLTPVGELVNAAQTAILNVTGTETELSTSGGTSDGRFIAPTGAQVLELGVLNATIHQINEHVDVHDLDPLTDIYEQILENLLAQ.

His68 contributes to the Zn(2+) binding site. The active site involves Asp70. Asp101 contacts Zn(2+). Catalysis depends on Glu135, which acts as the Proton acceptor. Residues Glu136, Glu164, and His350 each contribute to the Zn(2+) site.

This sequence belongs to the peptidase M20A family. DapE subfamily. Homodimer. The cofactor is Zn(2+). It depends on Co(2+) as a cofactor.

It catalyses the reaction N-succinyl-(2S,6S)-2,6-diaminopimelate + H2O = (2S,6S)-2,6-diaminopimelate + succinate. Its pathway is amino-acid biosynthesis; L-lysine biosynthesis via DAP pathway; LL-2,6-diaminopimelate from (S)-tetrahydrodipicolinate (succinylase route): step 3/3. Its function is as follows. Catalyzes the hydrolysis of N-succinyl-L,L-diaminopimelic acid (SDAP), forming succinate and LL-2,6-diaminopimelate (DAP), an intermediate involved in the bacterial biosynthesis of lysine and meso-diaminopimelic acid, an essential component of bacterial cell walls. The polypeptide is Succinyl-diaminopimelate desuccinylase (Acinetobacter baumannii (strain ATCC 17978 / DSM 105126 / CIP 53.77 / LMG 1025 / NCDC KC755 / 5377)).